A 333-amino-acid chain; its full sequence is Adenosine deaminase (333 aa).

The Zn(2+) site is built by H12 and H14. Substrate-binding residues include H14, D16, and G170. Zn(2+) is bound at residue H197. E200 acts as the Proton donor in catalysis. Residue D278 coordinates Zn(2+). D279 contributes to the substrate binding site.

Belongs to the metallo-dependent hydrolases superfamily. Adenosine and AMP deaminases family. Adenosine deaminase subfamily. It depends on Zn(2+) as a cofactor.

It catalyses the reaction adenosine + H2O + H(+) = inosine + NH4(+). It carries out the reaction 2'-deoxyadenosine + H2O + H(+) = 2'-deoxyinosine + NH4(+). Catalyzes the hydrolytic deamination of adenosine and 2-deoxyadenosine. This chain is Adenosine deaminase, found in Shigella sonnei (strain Ss046).